Consider the following 969-residue polypeptide: Isoleucine--tRNA ligase (969 aa).

Positions 68–78 (PYANGALHMGH) match the 'HIGH' region motif. L-isoleucyl-5'-AMP is bound at residue glutamate 585. The short motif at 626–630 (KMSKS) is the 'KMSKS' region element. Lysine 629 is a binding site for ATP. Zn(2+)-binding residues include cysteine 939, cysteine 942, cysteine 959, and cysteine 962.

The protein belongs to the class-I aminoacyl-tRNA synthetase family. IleS type 1 subfamily. In terms of assembly, monomer. Zn(2+) serves as cofactor.

The protein localises to the cytoplasm. The enzyme catalyses tRNA(Ile) + L-isoleucine + ATP = L-isoleucyl-tRNA(Ile) + AMP + diphosphate. Catalyzes the attachment of isoleucine to tRNA(Ile). As IleRS can inadvertently accommodate and process structurally similar amino acids such as valine, to avoid such errors it has two additional distinct tRNA(Ile)-dependent editing activities. One activity is designated as 'pretransfer' editing and involves the hydrolysis of activated Val-AMP. The other activity is designated 'posttransfer' editing and involves deacylation of mischarged Val-tRNA(Ile). In Prochlorococcus marinus (strain MIT 9211), this protein is Isoleucine--tRNA ligase.